Consider the following 366-residue polypeptide: Methylthioribose-1-phosphate isomerase (366 aa).

Residue D260 is the Proton donor of the active site.

Belongs to the eIF-2B alpha/beta/delta subunits family. MtnA subfamily.

It is found in the cytoplasm. The protein resides in the nucleus. It carries out the reaction 5-(methylsulfanyl)-alpha-D-ribose 1-phosphate = 5-(methylsulfanyl)-D-ribulose 1-phosphate. Its pathway is amino-acid biosynthesis; L-methionine biosynthesis via salvage pathway; L-methionine from S-methyl-5-thio-alpha-D-ribose 1-phosphate: step 1/6. Functionally, catalyzes the interconversion of methylthioribose-1-phosphate (MTR-1-P) into methylthioribulose-1-phosphate (MTRu-1-P). This Caenorhabditis elegans protein is Methylthioribose-1-phosphate isomerase.